A 434-amino-acid polypeptide reads, in one-letter code: 4-hydroxyphenylpyruvate dioxygenase (434 aa).

The tract at residues 1–21 (MPPTPTTPAATGAAAAVTPEH) is disordered. Over residues 7 to 19 (TPAATGAAAAVTP) the composition is skewed to low complexity. VOC domains are found at residues 41–192 (SFHH…FLPG) and 208–368 (RFDH…IFTK). Fe cation contacts are provided by His-211, His-293, and Glu-379.

This sequence belongs to the 4HPPD family. The cofactor is Fe cation.

Its subcellular location is the cytoplasm. The catalysed reaction is 3-(4-hydroxyphenyl)pyruvate + O2 = homogentisate + CO2. Its pathway is amino-acid degradation; L-phenylalanine degradation; acetoacetate and fumarate from L-phenylalanine: step 3/6. It participates in cofactor biosynthesis; prenylquinone biosynthesis. In Hordeum vulgare (Barley), this protein is 4-hydroxyphenylpyruvate dioxygenase.